The primary structure comprises 200 residues: N-(5'-phosphoribosyl)anthranilate isomerase (200 aa).

The protein belongs to the TrpF family.

The catalysed reaction is N-(5-phospho-beta-D-ribosyl)anthranilate = 1-(2-carboxyphenylamino)-1-deoxy-D-ribulose 5-phosphate. The protein operates within amino-acid biosynthesis; L-tryptophan biosynthesis; L-tryptophan from chorismate: step 3/5. In Endomicrobium trichonymphae, this protein is N-(5'-phosphoribosyl)anthranilate isomerase.